The sequence spans 597 residues: Protein GRISEA (597 aa).

The copper-fist DNA-binding region spans 1–41; the sequence is MPIINGQKMACGPCIRGHRSTKCNHYNERVMVPVRKPGRPL. Residues cysteine 11, cysteine 14, cysteine 23, and histidine 25 each coordinate Zn(2+). Disordered stretches follow at residues 70 to 115, 233 to 352, 407 to 428, and 467 to 541; these read PAGT…ASRR, AFVD…PGFG, SRPP…NGNN, and SPNS…SPAL. A compositionally biased stretch (polar residues) spans 92–103; sequence SPASRTSSNRVT. Positions 104-115 are enriched in low complexity; it reads KSGSGSKSASRR. Over residues 269 to 281 the composition is skewed to gly residues; it reads GGSGGGGCCGGGK. Residues 287-314 are compositionally biased toward pro residues; sequence QAPPPVPAPLPTPPQQQMPNIMPPPQPQ. The segment covering 469 to 495 has biased composition (low complexity); that stretch reads NSSHGNSGSADSSANASPSANPLNLAS. Residues 521-530 are compositionally biased toward polar residues; that stretch reads ANESDGSSNA.

It localises to the nucleus. Functionally, copper-sensing transcription factor that regulates copper uptake by transactivation of Ctr3, a high affinity copper permease. Binds to the palindromic UAS sequence 5'-TGTTGCTCANNNNAGAGCAACT-3'. Also transactivates Sod2, a mitochondrial manganese superoxide dismutase through the palindromic UAS sequence 5'-GTTTGCTCA-3' with 352 bp separating the two inverted repeats. Loss of function indirectly leads to rearrangement of mitochondrial DNA associated with senescence in wild-type strains. The sequence is that of Protein GRISEA from Podospora anserina (Pleurage anserina).